The chain runs to 644 residues: Exoribonuclease 2 (644 aa).

The 328-residue stretch at 189-516 folds into the RNB domain; sequence REDLTALDFV…NHRLLKAVIK (328 aa). Positions 561–643 constitute an S1 motif domain; sequence DTRFAAEIVD…ETRSIIARPV (83 aa).

The protein belongs to the RNR ribonuclease family. RNase II subfamily.

It localises to the cytoplasm. The enzyme catalyses Exonucleolytic cleavage in the 3'- to 5'-direction to yield nucleoside 5'-phosphates.. In terms of biological role, involved in mRNA degradation. Hydrolyzes single-stranded polyribonucleotides processively in the 3' to 5' direction. The polypeptide is Exoribonuclease 2 (Shigella dysenteriae serotype 1 (strain Sd197)).